Here is a 465-residue protein sequence, read N- to C-terminus: Putative mannose-1-phosphate guanylyltransferase (465 aa).

The protein belongs to the mannose-6-phosphate isomerase type 2 family.

It carries out the reaction alpha-D-mannose 1-phosphate + GTP + H(+) = GDP-alpha-D-mannose + diphosphate. Its pathway is nucleotide-sugar biosynthesis; GDP-alpha-D-mannose biosynthesis; GDP-alpha-D-mannose from alpha-D-mannose 1-phosphate (GTP route): step 1/1. The protein operates within bacterial outer membrane biogenesis; LPS O-antigen biosynthesis. This chain is Putative mannose-1-phosphate guanylyltransferase (rfbA), found in Vibrio cholerae serotype O1 (strain ATCC 39315 / El Tor Inaba N16961).